The chain runs to 150 residues: Large ribosomal subunit protein bL9 (150 aa).

This sequence belongs to the bacterial ribosomal protein bL9 family.

Binds to the 23S rRNA. This chain is Large ribosomal subunit protein bL9, found in Burkholderia thailandensis (strain ATCC 700388 / DSM 13276 / CCUG 48851 / CIP 106301 / E264).